The chain runs to 399 residues: G2/mitotic-specific cyclin-B2 (399 aa).

The disordered stretch occupies residues 58–78 (PVKATKGPGKMTNTVVPPKPP).

This sequence belongs to the cyclin family. Cyclin AB subfamily. Interacts with the CDK1 protein kinase to form a serine/threonine kinase holoenzyme complex also known as maturation promoting factor (MPF). The cyclin subunit imparts substrate specificity to the complex.

Its function is as follows. Essential for the control of the cell cycle at the G2/M (mitosis) transition. The chain is G2/mitotic-specific cyclin-B2 (CCNB2) from Gallus gallus (Chicken).